A 196-amino-acid chain; its full sequence is Holliday junction branch migration complex subunit RuvA (196 aa).

The tract at residues 1–63 (MIEYIKGEIV…EDAHLLFGFA (63 aa)) is domain I. The segment at 64-142 (EKIERELFLL…PMESMAGNLP (79 aa)) is domain II. Residues 142 to 146 (PEASV) form a flexible linker region. A domain III region spans residues 147 to 196 (SNGAVTEEAVAALVMLGFQKAASQKAVSAILKGSPTLAVEQVIKTALRML).

The protein belongs to the RuvA family. In terms of assembly, homotetramer. Forms an RuvA(8)-RuvB(12)-Holliday junction (HJ) complex. HJ DNA is sandwiched between 2 RuvA tetramers; dsDNA enters through RuvA and exits via RuvB. An RuvB hexamer assembles on each DNA strand where it exits the tetramer. Each RuvB hexamer is contacted by two RuvA subunits (via domain III) on 2 adjacent RuvB subunits; this complex drives branch migration. In the full resolvosome a probable DNA-RuvA(4)-RuvB(12)-RuvC(2) complex forms which resolves the HJ.

It is found in the cytoplasm. In terms of biological role, the RuvA-RuvB-RuvC complex processes Holliday junction (HJ) DNA during genetic recombination and DNA repair, while the RuvA-RuvB complex plays an important role in the rescue of blocked DNA replication forks via replication fork reversal (RFR). RuvA specifically binds to HJ cruciform DNA, conferring on it an open structure. The RuvB hexamer acts as an ATP-dependent pump, pulling dsDNA into and through the RuvAB complex. HJ branch migration allows RuvC to scan DNA until it finds its consensus sequence, where it cleaves and resolves the cruciform DNA. The protein is Holliday junction branch migration complex subunit RuvA of Parabacteroides distasonis (strain ATCC 8503 / DSM 20701 / CIP 104284 / JCM 5825 / NCTC 11152).